Here is a 267-residue protein sequence, read N- to C-terminus: ATP synthase subunit a (267 aa).

A run of 5 helical transmembrane segments spans residues 38-58, 98-118, 145-165, 208-228, and 238-258; these read WHID…FVFY, IAPL…MDLI, NITF…SIKI, LFGN…MPWW, and AIFH…LTIV.

The protein belongs to the ATPase A chain family. In terms of assembly, F-type ATPases have 2 components, CF(1) - the catalytic core - and CF(0) - the membrane proton channel. CF(1) has five subunits: alpha(3), beta(3), gamma(1), delta(1), epsilon(1). CF(0) has three main subunits: a(1), b(2) and c(9-12). The alpha and beta chains form an alternating ring which encloses part of the gamma chain. CF(1) is attached to CF(0) by a central stalk formed by the gamma and epsilon chains, while a peripheral stalk is formed by the delta and b chains.

Its subcellular location is the cell inner membrane. In terms of biological role, key component of the proton channel; it plays a direct role in the translocation of protons across the membrane. The protein is ATP synthase subunit a of Psychromonas ingrahamii (strain DSM 17664 / CCUG 51855 / 37).